Here is a 347-residue protein sequence, read N- to C-terminus: NADH-ubiquinone oxidoreductase chain 2 (347 aa).

Helical transmembrane passes span 3–23 (PPIL…VLTS), 25–45 (HWLL…PILM), 60–80 (FLTQ…NLMF), 96–116 (GLVT…FWVP), 122–142 (ISLS…LSIL), 153–173 (LLIT…LNQT), 178–198 (ILAY…TYNP), 200–220 (LMIL…MLFM), 237–257 (LPLM…LPPL), 274–294 (DMII…YFYM), and 323–343 (IILL…TPMM).

The protein belongs to the complex I subunit 2 family. As to quaternary structure, core subunit of respiratory chain NADH dehydrogenase (Complex I) which is composed of 45 different subunits. Interacts with TMEM242.

The protein localises to the mitochondrion inner membrane. The catalysed reaction is a ubiquinone + NADH + 5 H(+)(in) = a ubiquinol + NAD(+) + 4 H(+)(out). Its function is as follows. Core subunit of the mitochondrial membrane respiratory chain NADH dehydrogenase (Complex I) which catalyzes electron transfer from NADH through the respiratory chain, using ubiquinone as an electron acceptor. Essential for the catalytic activity and assembly of complex I. The protein is NADH-ubiquinone oxidoreductase chain 2 of Halichoerus grypus (Gray seal).